A 346-amino-acid polypeptide reads, in one-letter code: Putative D-alanine--D-lactate ligase (346 aa).

In terms of domain architecture, ATP-grasp spans 137-338 (YVVARSAGIA…LSEVIDRTLS (202 aa)). Residue 163–216 (RLTYPVFVKPARSGSSFGVSKVCRPEDLATAVESARRYDTKVLIEAAVVGSEVG) participates in ATP binding. The Mg(2+) site is built by D292, E305, and N307.

It belongs to the D-alanine--D-alanine ligase family. The cofactor is Mg(2+). Mn(2+) is required as a cofactor.

It is found in the cell membrane. Required for resistance to glycopeptides antibiotics. D-Ala--D-Ala ligase of altered specificity which catalyzes ester bond formation between D-Ala and various D-hydroxy acids; producing a peptidoglycan which does not terminate by D-alanine but by D-lactate, thus preventing vancomycin binding. The chain is Putative D-alanine--D-lactate ligase from Streptomyces coelicolor (strain ATCC BAA-471 / A3(2) / M145).